Here is a 270-residue protein sequence, read N- to C-terminus: Homeobox protein pal-1 (270 aa).

Disordered stretches follow at residues 1-24, 96-130, and 175-201; these read MSVD…TTVP, VKPP…SGAA, and LGNN…TNNV. Composition is skewed to low complexity over residues 14-24 and 101-130; these read SSSTPSPTTVP and SNGS…SGAA. Positions 206–265 form a DNA-binding region, homeobox; the sequence is ADKYRMVYSDYQRLELEKEFHTSPFITSDRKSQLSTMLSLTERQIKIWFQNRRAKDRRDK.

The protein belongs to the Caudal homeobox family. In terms of assembly, interacts with tir-1 and let-756. Blastomeres. Embryo. Oocytes.

It is found in the nucleus. The protein localises to the chromosome. Its subcellular location is the centromere. The protein resides in the kinetochore. In terms of biological role, transcriptional activator. Interacts with promoter regions for tbx-8.9, tbx-9, elt-1, hnd-1, scrt-1, and vab-7 genes. Binds the sequence ATTTATGAC. Binds to the enhancer region of the hlh-1 gene promoter during embryonic body wall muscle development. Activates the gene for mab-5 in embryo development. Necessary for vab-7 expression in C blastomeres in the posterior of embryos. Required for posterior V6 neuroectoblast cell fate specification during postembryonic neurogenesis (patterning) which generates the characteristic ray lineage during male tail development. Binds to ced-3 promoter and activated expression which is crucial for tail-spike cell death. Has a role in E cell specification in endoderm development and body wall muscle development. This is Homeobox protein pal-1 (pal-1) from Caenorhabditis elegans.